Consider the following 322-residue polypeptide: Quinolinate synthase (322 aa).

2 residues coordinate iminosuccinate: His-37 and Ser-54. Residue Cys-99 coordinates [4Fe-4S] cluster. Iminosuccinate-binding positions include 125–127 and Ser-142; that span reads YVN. [4Fe-4S] cluster is bound at residue Cys-185. Residues 211–213 and Thr-228 contribute to the iminosuccinate site; that span reads HPE. [4Fe-4S] cluster is bound at residue Cys-278.

Belongs to the quinolinate synthase family. Type 2 subfamily. [4Fe-4S] cluster is required as a cofactor.

It localises to the cytoplasm. The catalysed reaction is iminosuccinate + dihydroxyacetone phosphate = quinolinate + phosphate + 2 H2O + H(+). Its pathway is cofactor biosynthesis; NAD(+) biosynthesis; quinolinate from iminoaspartate: step 1/1. Functionally, catalyzes the condensation of iminoaspartate with dihydroxyacetone phosphate to form quinolinate. In Chlorobaculum tepidum (strain ATCC 49652 / DSM 12025 / NBRC 103806 / TLS) (Chlorobium tepidum), this protein is Quinolinate synthase.